We begin with the raw amino-acid sequence, 121 residues long: Basic phospholipase A2 homolog 2 (121 aa).

Cystine bridges form between cysteine 26–cysteine 115, cysteine 28–cysteine 44, cysteine 43–cysteine 95, cysteine 49–cysteine 121, cysteine 50–cysteine 88, cysteine 57–cysteine 81, and cysteine 75–cysteine 86. The segment at 105-117 is important for membrane-damaging activities in eukaryotes and bacteria; heparin-binding; the sequence is KKYRYHLKPLCKK.

It belongs to the phospholipase A2 family. Group II subfamily. K49 sub-subfamily. Homodimer; non-covalently linked (probable alternative/compact dimer conformation in solution). Expressed by the venom gland.

The protein resides in the secreted. Snake venom phospholipase A2 homolog that lacks enzymatic activity. Is myotoxic and displays edema-inducing activities in mouse paw. Also displays cytotoxic activity against myotubes. A model of myotoxic mechanism has been proposed: an apo Lys49-PLA2 is activated by the entrance of a hydrophobic molecule (e.g. fatty acid) at the hydrophobic channel of the protein leading to a reorientation of a monomer. This reorientation causes a transition between 'inactive' to 'active' states, causing alignment of C-terminal and membrane-docking sites (MDoS) side-by-side and putting the membrane-disruption sites (MDiS) in the same plane, exposed to solvent and in a symmetric position for both monomers. The MDoS region stabilizes the toxin on membrane by the interaction of charged residues with phospholipid head groups. Subsequently, the MDiS region destabilizes the membrane with penetration of hydrophobic residues. This insertion causes a disorganization of the membrane, allowing an uncontrolled influx of ions (i.e. calcium and sodium), and eventually triggering irreversible intracellular alterations and cell death. This chain is Basic phospholipase A2 homolog 2, found in Bothrops brazili (Brazil's lancehead).